A 102-amino-acid chain; its full sequence is Small ribosomal subunit protein uS10 (102 aa).

Belongs to the universal ribosomal protein uS10 family. As to quaternary structure, part of the 30S ribosomal subunit.

Its function is as follows. Involved in the binding of tRNA to the ribosomes. This Clavibacter michiganensis subsp. michiganensis (strain NCPPB 382) protein is Small ribosomal subunit protein uS10.